A 291-amino-acid polypeptide reads, in one-letter code: tRNA dimethylallyltransferase (291 aa).

8 to 15 serves as a coordination point for ATP; that stretch reads GSTASGKT. Substrate is bound at residue 10 to 15; sequence TASGKT. The interval 33 to 36 is interaction with substrate tRNA; it reads DSLC.

This sequence belongs to the IPP transferase family. As to quaternary structure, monomer. Requires Mg(2+) as cofactor.

It catalyses the reaction adenosine(37) in tRNA + dimethylallyl diphosphate = N(6)-dimethylallyladenosine(37) in tRNA + diphosphate. Its function is as follows. Catalyzes the transfer of a dimethylallyl group onto the adenine at position 37 in tRNAs that read codons beginning with uridine, leading to the formation of N6-(dimethylallyl)adenosine (i(6)A). The sequence is that of tRNA dimethylallyltransferase from Aliarcobacter butzleri (strain RM4018) (Arcobacter butzleri).